The following is an 82-amino-acid chain: Immediate early response 3-interacting protein 1 (82 aa).

Transmembrane regions (helical) follow at residues 2–22 and 62–82; these read AFTL…IAVL and VMRV…LLFG.

Belongs to the YOS1 family.

It is found in the endoplasmic reticulum membrane. Functionally, regulator of endoplasmic reticulum secretion that acts as a key determinant of brain size. Required for secretion of extracellular matrix proteins. Required for correct brain development by depositing sufficient extracellular matrix proteins for tissue integrity and the proliferation of neural progenitors. Acts as a regulator of the unfolded protein response (UPR). The polypeptide is Immediate early response 3-interacting protein 1 (Mus musculus (Mouse)).